The following is a 611-amino-acid chain: Protein Spindly (611 aa).

Residues 1–288 adopt a coiled-coil conformation; it reads MEESETVLKL…QFQSLQKQHA (288 aa). Residues 499–511 are compositionally biased toward basic and acidic residues; that stretch reads LKEDSSLSTKEQD. The tract at residues 499–611 is disordered; the sequence is LKEDSSLSTK…PAATTQCPQQ (113 aa). Residues 549 to 567 show a composition bias toward polar residues; the sequence is RNTNNCSVTSTSPRSASEE. A compositionally biased stretch (basic and acidic residues) spans 570–583; sequence SESKRFDEEQEKRK.

Belongs to the Spindly family.

The protein resides in the chromosome. Its subcellular location is the centromere. It is found in the kinetochore. Functionally, required for the localization of dynein and dynactin to the mitotic kintochore. Dynein is believed to control the initial lateral interaction between the kinetochore and spindle microtubules and to facilitate the subsequent formation of end-on kinetochore-microtubule attachments mediated by the NDC80 complex. May act as an adapter protein linking the dynein motor complex to various cargos. This chain is Protein Spindly (spdl1), found in Xenopus tropicalis (Western clawed frog).